The sequence spans 173 residues: Skp-like protein (173 aa).

The first 19 residues, methionine 1 to alanine 19, serve as a signal peptide directing secretion.

Belongs to the Skp family.

This chain is Skp-like protein, found in Chlamydia muridarum (strain MoPn / Nigg).